We begin with the raw amino-acid sequence, 262 residues long: Small ribosomal subunit protein eS4y (262 aa).

An S4 RNA-binding domain is found at Leu42–Asp104.

Belongs to the eukaryotic ribosomal protein eS4 family.

It is found in the cytoplasm. This chain is Small ribosomal subunit protein eS4y (RPS4B), found in Arabidopsis thaliana (Mouse-ear cress).